Here is an 85-residue protein sequence, read N- to C-terminus: Beta-insect depressant toxin LqhIT2 (85 aa).

Residues 1 to 21 form the signal peptide; that stretch reads MKLLLLLIVSASMLIESLVNA. Residues 22 to 82 form the LCN-type CS-alpha/beta domain; sequence DGYIKRRDGC…TWKSETNTCG (61 aa). Cystine bridges form between Cys31-Cys81, Cys35-Cys56, Cys42-Cys63, and Cys46-Cys65. Gly82 is modified (glycine amide).

The protein belongs to the long (4 C-C) scorpion toxin superfamily. Sodium channel inhibitor family. Beta subfamily. In terms of tissue distribution, expressed by the venom gland.

Its subcellular location is the secreted. In terms of biological role, depressant insect beta-toxins cause a transient contraction paralysis followed by a slow flaccid paralysis. They bind voltage-independently at site-4 of sodium channels (Nav) and shift the voltage of activation toward more negative potentials thereby affecting sodium channel activation and promoting spontaneous and repetitive firing. This toxin is active only on insects. The chain is Beta-insect depressant toxin LqhIT2 from Leiurus hebraeus (Hebrew deathstalker scorpion).